The following is a 445-amino-acid chain: Histidinol dehydrogenase (445 aa).

3 residues coordinate NAD(+): Tyr144, Gln205, and Asn228. Substrate is bound by residues Ser251, Gln273, and His276. Residues Gln273 and His276 each coordinate Zn(2+). Residues Glu341 and His342 each act as proton acceptor in the active site. Residues His342, Asp375, Glu429, and His434 each contribute to the substrate site. Asp375 serves as a coordination point for Zn(2+). Residue His434 coordinates Zn(2+).

It belongs to the histidinol dehydrogenase family. Zn(2+) serves as cofactor.

The enzyme catalyses L-histidinol + 2 NAD(+) + H2O = L-histidine + 2 NADH + 3 H(+). The protein operates within amino-acid biosynthesis; L-histidine biosynthesis; L-histidine from 5-phospho-alpha-D-ribose 1-diphosphate: step 9/9. Catalyzes the sequential NAD-dependent oxidations of L-histidinol to L-histidinaldehyde and then to L-histidine. The polypeptide is Histidinol dehydrogenase (Cupriavidus pinatubonensis (strain JMP 134 / LMG 1197) (Cupriavidus necator (strain JMP 134))).